An 81-amino-acid chain; its full sequence is Serine/arginine-rich splicing factor 6 (81 aa).

Residues 1-48 are compositionally biased toward basic residues; it reads RSRSRSRRSSRSRSRSISKSRSRSRSRSKGRSRSRSKGRKSRSKSKSK. Residues 1-81 form a disordered region; sequence RSRSRSRRSS…SRSRSRSRSP (81 aa). A compositionally biased stretch (basic and acidic residues) spans 62–71; that stretch reads RSKDEYEKSR. Basic residues predominate over residues 72–81; that stretch reads SRSRSRSRSP.

The protein belongs to the splicing factor SR family. As to quaternary structure, binds SREK1/SFRS12. Interacts with DYRK1A. Post-translationally, extensively phosphorylated on serine residues in the RS domain. Phosphorylated by DYRK1A, probably in the RS domain. Phosphorylation by DYRK1A modulates alternative splice site selection and inhibits the expression of MAPT/Tau exon 10.

The protein localises to the nucleus. Its subcellular location is the nucleus speckle. Functionally, plays a role in constitutive splicing and modulates the selection of alternative splice sites. Plays a role in the alternative splicing of MAPT/Tau exon 10. Binds to alternative exons of TNC pre-mRNA and promotes the expression of alternatively spliced TNC. Plays a role in wound healing and in the regulation of keratinocyte differentiation and proliferation via its role in alternative splicing. The protein is Serine/arginine-rich splicing factor 6 (SRSF6) of Oryctolagus cuniculus (Rabbit).